Consider the following 252-residue polypeptide: Imidazole glycerol phosphate synthase subunit HisF (252 aa).

Residues aspartate 11 and aspartate 130 contribute to the active site.

It belongs to the HisA/HisF family. In terms of assembly, heterodimer of HisH and HisF.

It is found in the cytoplasm. It catalyses the reaction 5-[(5-phospho-1-deoxy-D-ribulos-1-ylimino)methylamino]-1-(5-phospho-beta-D-ribosyl)imidazole-4-carboxamide + L-glutamine = D-erythro-1-(imidazol-4-yl)glycerol 3-phosphate + 5-amino-1-(5-phospho-beta-D-ribosyl)imidazole-4-carboxamide + L-glutamate + H(+). It participates in amino-acid biosynthesis; L-histidine biosynthesis; L-histidine from 5-phospho-alpha-D-ribose 1-diphosphate: step 5/9. In terms of biological role, IGPS catalyzes the conversion of PRFAR and glutamine to IGP, AICAR and glutamate. The HisF subunit catalyzes the cyclization activity that produces IGP and AICAR from PRFAR using the ammonia provided by the HisH subunit. This Lacticaseibacillus casei (strain BL23) (Lactobacillus casei) protein is Imidazole glycerol phosphate synthase subunit HisF.